A 179-amino-acid chain; its full sequence is UPF0227 protein Swoo_1808 (179 aa).

The protein belongs to the UPF0227 family.

This Shewanella woodyi (strain ATCC 51908 / MS32) protein is UPF0227 protein Swoo_1808.